We begin with the raw amino-acid sequence, 387 residues long: Succinate--CoA ligase [ADP-forming] subunit beta (387 aa).

Residues 9 to 244 (KALLQRYGVN…WSQDDAKEAE (236 aa)) form the ATP-grasp domain. Residues lysine 46, 53–55 (GRG), glutamate 99, leucine 102, and glutamate 107 contribute to the ATP site. Mg(2+)-binding residues include asparagine 199 and aspartate 213. Residues asparagine 264 and 321 to 323 (GIM) contribute to the substrate site.

Belongs to the succinate/malate CoA ligase beta subunit family. In terms of assembly, heterotetramer of two alpha and two beta subunits. Mg(2+) is required as a cofactor.

It catalyses the reaction succinate + ATP + CoA = succinyl-CoA + ADP + phosphate. The catalysed reaction is GTP + succinate + CoA = succinyl-CoA + GDP + phosphate. Its pathway is carbohydrate metabolism; tricarboxylic acid cycle; succinate from succinyl-CoA (ligase route): step 1/1. Functionally, succinyl-CoA synthetase functions in the citric acid cycle (TCA), coupling the hydrolysis of succinyl-CoA to the synthesis of either ATP or GTP and thus represents the only step of substrate-level phosphorylation in the TCA. The beta subunit provides nucleotide specificity of the enzyme and binds the substrate succinate, while the binding sites for coenzyme A and phosphate are found in the alpha subunit. The protein is Succinate--CoA ligase [ADP-forming] subunit beta of Methylobacillus flagellatus (strain ATCC 51484 / DSM 6875 / VKM B-1610 / KT).